The primary structure comprises 508 residues: Serum response factor (508 aa).

Positions 1–28 (MLPTQAGAAAALGRGSALGGSLNRTPTG) are enriched in low complexity. The disordered stretch occupies residues 1–97 (MLPTQAGAAA…EEELGAERRG (97 aa)). A compositionally biased stretch (gly residues) spans 29-53 (RPGGGGGTRGANGGRVPGNGAGLGP). The segment covering 61 to 80 (AAAAATTPAPTAGALYSGSE) has biased composition (low complexity). Ser-77, Ser-79, Ser-83, Ser-85, and Ser-103 each carry phosphoserine. Residues 81 to 91 (GDSESGEEEEL) show a composition bias toward acidic residues. A DNA-binding region spans residues 133–222 (GAKPGKKTRG…ALIQTCLNSP (90 aa)). Positions 141-201 (RGRVKIKMEF…GHVYTFATRK (61 aa)) constitute an MADS-box domain. The tract at residues 168–222 (IMKKAYELSTLTGTQVLLLVASETGHVYTFATRKLQPMITSETGKALIQTCLNSP) is involved in dimerization. Positions 219–240 (LNSPDSPPRSDPTTDQRMSATG) are disordered. 2 positions are modified to phosphoserine: Ser-224 and Ser-253. 5 O-linked (GlcNAc) serine glycosylation sites follow: Ser-277, Ser-307, Ser-309, Ser-316, and Ser-383. Positions 362 to 385 (VHQAPQQASPSRDSSTDLTQTSSS) are disordered. Phosphoserine; by dsDNA kinase occurs at positions 435 and 446.

Binds DNA as a multimer, probably a dimer. Interacts with MRTFA, forming the SRF-MRTFA nuclear complex which binds the 5'-CArG-3' consensus motif (CArG box) on DNA via SRF. Forms a nuclear ternary complex with MRTFA and SCAI. Interacts with MRTFB. Interacts with MLLT7/FOXO4, NKX3A and SSRP1. Interacts with ARID2. Interacts with SRFBP1. Interacts with FOXK1. Interacts with LPXN. Interacts with OLFM2; the interaction promotes dissociation of SRF from the transcriptional repressor HEY2, facilitates binding of SRF to target genes and promotes smooth muscle differentiation. Interacts with NKX3-1. Interacts with KAT5. Interacts with PURB. Phosphorylated by PRKDC.

It is found in the nucleus. Functionally, SRF is a transcription factor that binds to the serum response element (SRE), a short sequence of dyad symmetry located 300 bp to the 5' of the site of transcription initiation of some genes (such as FOS). Together with MRTFA transcription coactivator, controls expression of genes regulating the cytoskeleton during development, morphogenesis and cell migration. The SRF-MRTFA complex activity responds to Rho GTPase-induced changes in cellular globular actin (G-actin) concentration, thereby coupling cytoskeletal gene expression to cytoskeletal dynamics. Required for cardiac differentiation and maturation. The polypeptide is Serum response factor (SRF) (Homo sapiens (Human)).